The sequence spans 185 residues: Ribosome-recycling factor (185 aa).

This sequence belongs to the RRF family.

Its subcellular location is the cytoplasm. Functionally, responsible for the release of ribosomes from messenger RNA at the termination of protein biosynthesis. May increase the efficiency of translation by recycling ribosomes from one round of translation to another. The sequence is that of Ribosome-recycling factor from Campylobacter concisus (strain 13826).